A 395-amino-acid polypeptide reads, in one-letter code: Gastric triacylglycerol lipase (395 aa).

A signal peptide spans 1-18 (MWLLLVTSVLSAFGGAHG). A glycan (N-linked (GlcNAc...) asparagine) is linked at Asn-33. Residues 81 to 376 (LQHGLIASAT…LPYNHLDFIW (296 aa)) form the AB hydrolase-1 domain. Ser-171 functions as the Nucleophile in the catalytic mechanism. An intrachain disulfide couples Cys-245 to Cys-254. A glycan (N-linked (GlcNAc...) asparagine) is linked at Asn-270. Catalysis depends on charge relay system residues Asp-342 and His-371.

This sequence belongs to the AB hydrolase superfamily. Lipase family.

Its subcellular location is the secreted. The catalysed reaction is a triacylglycerol + H2O = a diacylglycerol + a fatty acid + H(+). It carries out the reaction 1,2,3-tri-(9Z-octadecenoyl)-glycerol + H2O = 1,2-di-(9Z-octadecenoyl)-sn-glycerol + (9Z)-octadecenoate + H(+). The enzyme catalyses 1,2,3-trioctanoylglycerol + H2O = 1,2-dioctanoyl-sn-glycerol + octanoate + H(+). Its function is as follows. Catalyzes the hydrolysis of triacylglycerols to yield free fatty acids, diacylglycerol, monoacylglycerol, and glycerol. Shows a preferential hydrolysis at the sn-3 position of triacylglycerol. The polypeptide is Gastric triacylglycerol lipase (Lipf) (Mus musculus (Mouse)).